The chain runs to 688 residues: Elongation factor G (688 aa).

One can recognise a tr-type G domain in the interval 6–280; it reads KLFRNFGIMA…AVVDFLPSPI (275 aa). GTP contacts are provided by residues 15–22, 79–83, and 133–136; these read AHIDAGKT, DTPGH, and NKMD.

The protein belongs to the TRAFAC class translation factor GTPase superfamily. Classic translation factor GTPase family. EF-G/EF-2 subfamily.

Its subcellular location is the cytoplasm. Functionally, catalyzes the GTP-dependent ribosomal translocation step during translation elongation. During this step, the ribosome changes from the pre-translocational (PRE) to the post-translocational (POST) state as the newly formed A-site-bound peptidyl-tRNA and P-site-bound deacylated tRNA move to the P and E sites, respectively. Catalyzes the coordinated movement of the two tRNA molecules, the mRNA and conformational changes in the ribosome. The protein is Elongation factor G of Ureaplasma parvum serovar 3 (strain ATCC 27815 / 27 / NCTC 11736).